Consider the following 173-residue polypeptide: NADH-ubiquinone oxidoreductase chain 6 (173 aa).

A run of 5 helical transmembrane segments spans residues 1 to 21, 27 to 47, 48 to 68, 87 to 107, and 139 to 159; these read MTYF…AVAS, YGVV…LSLG, ASFV…VVFV, VIGY…IGGF, and WGAG…FVVL.

Belongs to the complex I subunit 6 family.

Its subcellular location is the mitochondrion membrane. The enzyme catalyses a ubiquinone + NADH + 5 H(+)(in) = a ubiquinol + NAD(+) + 4 H(+)(out). Its function is as follows. Core subunit of the mitochondrial membrane respiratory chain NADH dehydrogenase (Complex I) that is believed to belong to the minimal assembly required for catalysis. Complex I functions in the transfer of electrons from NADH to the respiratory chain. The immediate electron acceptor for the enzyme is believed to be ubiquinone. This is NADH-ubiquinone oxidoreductase chain 6 (MT-ND6) from Brachyramphus brevirostris (Kittlitz's murrelet).